The sequence spans 131 residues: Fumarate reductase subunit C (131 aa).

The next 3 helical transmembrane spans lie at 30 to 50, 57 to 77, and 109 to 129; these read EGTA…LFAL, WMGF…LITL, and IIKG…YVAL.

Belongs to the FrdC family. In terms of assembly, part of an enzyme complex containing four subunits: a flavoprotein (FrdA), an iron-sulfur protein (FrdB), and two hydrophobic anchor proteins (FrdC and FrdD).

The protein resides in the cell inner membrane. Two distinct, membrane-bound, FAD-containing enzymes are responsible for the catalysis of fumarate and succinate interconversion; fumarate reductase is used in anaerobic growth, and succinate dehydrogenase is used in aerobic growth. Anchors the catalytic components of the fumarate reductase complex to the cell inner membrane, binds quinones. The protein is Fumarate reductase subunit C of Salmonella heidelberg (strain SL476).